The primary structure comprises 212 residues: Secreted and transmembrane protein 1b (212 aa).

Positions 1–28 (MLAYSVTSSGLFPRMLWALLLLAASLNA) are cleaved as a signal peptide. Over 29-160 (HNDVWDEPCC…DKPPTAVRTE (132 aa)) the chain is Extracellular. Residues Cys38 and Cys55 are joined by a disulfide bond. 4 N-linked (GlcNAc...) asparagine glycosylation sites follow: Asn56, Asn85, Asn114, and Asn130. A helical membrane pass occupies residues 161-181 (VIIIIAIATTIIITGIGVFVW). Residues 182–212 (YKQFPVAPQIQMSVPCLIHGSPGIPYLTLPP) are Cytoplasmic-facing.

It belongs to the SECTM family. In terms of assembly, interacts with CD7.

It localises to the cell membrane. The protein resides in the secreted. Its function is as follows. May be involved in thymocyte signaling. This chain is Secreted and transmembrane protein 1b (Sectm1b), found in Mus musculus (Mouse).